The chain runs to 830 residues: Venom phosphodiesterase (830 aa).

SMB domains follow at residues Pro-7–Thr-50 and Gln-51–Ser-95. Intrachain disulfides connect Cys-11–Cys-15, Cys-11–Cys-28, Cys-15–Cys-46, Cys-26–Cys-28, Cys-26–Cys-39, Cys-32–Cys-38, Cys-39–Cys-46, Cys-55–Cys-60, Cys-55–Cys-72, Cys-60–Cys-90, Cys-70–Cys-72, Cys-70–Cys-83, Cys-76–Cys-82, Cys-83–Cys-90, Cys-101–Cys-147, and Cys-109–Cys-321. The N-linked (GlcNAc...) asparagine glycan is linked to Asn-16. The Cell attachment site signature appears at Arg-35–Ala-37. Positions 124 and 162 each coordinate a divalent metal cation. Thr-162 serves as the catalytic AMP-threonine intermediate. Asn-193, Asn-236, and Asn-247 each carry an N-linked (GlcNAc...) asparagine glycan. Lys-248 is an AMP binding site. Residues Asp-282, His-286, Asp-329, and His-330 each contribute to the a divalent metal cation site. His-286 provides a ligand contact to AMP. Intrachain disulfides connect Cys-337-Cys-434, Cys-385-Cys-772, Cys-518-Cys-575, Cys-531-Cys-632, Cys-533-Cys-617, and Cys-740-Cys-750. His-439 provides a ligand contact to a divalent metal cation. Asn-489 carries N-linked (GlcNAc...) asparagine glycosylation. Asn-723 and Asn-742 each carry an N-linked (GlcNAc...) asparagine glycan.

Belongs to the nucleotide pyrophosphatase/phosphodiesterase family. Monomer cleaved in two subunits; disulfide-linked. Is synthesized as a single-chain protein and is subsequently cleaved to form a two-subunit protein held together with disulfide bonds. Requires a divalent metal cation as cofactor. Expressed by venom gland.

It localises to the secreted. It carries out the reaction ADP + H2O = AMP + phosphate + H(+). Its function is as follows. Hydrolyzes ADP with high activity. Shows weak or no activity on 5'-AMP, 5'-GMP, 3'-AMP, ATP, cAMP, and cGMP. Is devoid of monophosphatase and proteinase activities. Dose-dependently inhibits platelet aggregation induced by ADP and collagen. The protein is Venom phosphodiesterase of Naja atra (Chinese cobra).